The sequence spans 303 residues: Nucleotide-binding protein Acry_0446 (303 aa).

Residue 10–17 (GLSGAGRN) coordinates ATP. 54-57 (DART) lines the GTP pocket.

Belongs to the RapZ-like family.

Functionally, displays ATPase and GTPase activities. This is Nucleotide-binding protein Acry_0446 from Acidiphilium cryptum (strain JF-5).